The following is a 400-amino-acid chain: Dual specificity mitogen-activated protein kinase kinase 2 (400 aa).

Methionine 1 bears the N-acetylmethionine mark. Position 23 is a phosphoserine (serine 23). The region spanning 72–369 (FERISELGAG…LKLLTNHAFI (298 aa)) is the Protein kinase domain. ATP-binding positions include 78 to 86 (LGAGNGGVV) and lysine 101. Aspartate 194 (proton acceptor) is an active-site residue. Phosphoserine; by RAF is present on residues serine 222 and serine 226. The tract at residues 282–310 (PVVDGADGEPHSVSPRPRPPGRPISGHGM) is disordered. Phosphoserine is present on residues serine 293, serine 295, and serine 306. Residues threonine 394 and threonine 396 each carry the phosphothreonine modification.

It belongs to the protein kinase superfamily. STE Ser/Thr protein kinase family. MAP kinase kinase subfamily. As to quaternary structure, interacts with MORG1. Interacts with SGK1. Interacts with KSR1. Interacts with KSR1 and BRAF; the interaction with KSR1 mediates KSR1-BRAF dimerization. Interacts with GLS. Mg(2+) serves as cofactor. In terms of processing, MAPKK is itself dependent on Ser/Thr phosphorylation for activity catalyzed by MAP kinase kinase kinases (RAF or MEKK1). Phosphorylated by MAP2K1/MEK1. In terms of tissue distribution, expressed abundantly in the adult brain and muscle.

It localises to the cytoplasm. The protein localises to the membrane. It catalyses the reaction L-seryl-[protein] + ATP = O-phospho-L-seryl-[protein] + ADP + H(+). It carries out the reaction L-threonyl-[protein] + ATP = O-phospho-L-threonyl-[protein] + ADP + H(+). The catalysed reaction is L-tyrosyl-[protein] + ATP = O-phospho-L-tyrosyl-[protein] + ADP + H(+). In terms of biological role, catalyzes the concomitant phosphorylation of a threonine and a tyrosine residue in a Thr-Glu-Tyr sequence located in MAP kinases. Activates the ERK1 and ERK2 MAP kinases. Activates BRAF in a KSR1 or KSR2-dependent manner; by binding to KSR1 or KSR2 releases the inhibitory intramolecular interaction between KSR1 or KSR2 protein kinase and N-terminal domains which promotes KSR1 or KSR2-BRAF dimerization and BRAF activation. The chain is Dual specificity mitogen-activated protein kinase kinase 2 (Map2k2) from Rattus norvegicus (Rat).